The following is a 418-amino-acid chain: Enolase (418 aa).

Glutamine 162 is a binding site for (2R)-2-phosphoglycerate. Glutamate 204 acts as the Proton donor in catalysis. Mg(2+)-binding residues include aspartate 241, glutamate 283, and aspartate 309. Positions 334, 363, 364, and 385 each coordinate (2R)-2-phosphoglycerate. Lysine 334 acts as the Proton acceptor in catalysis.

This sequence belongs to the enolase family. Requires Mg(2+) as cofactor.

The protein localises to the cytoplasm. Its subcellular location is the secreted. It is found in the cell surface. It catalyses the reaction (2R)-2-phosphoglycerate = phosphoenolpyruvate + H2O. The protein operates within carbohydrate degradation; glycolysis; pyruvate from D-glyceraldehyde 3-phosphate: step 4/5. In terms of biological role, catalyzes the reversible conversion of 2-phosphoglycerate (2-PG) into phosphoenolpyruvate (PEP). It is essential for the degradation of carbohydrates via glycolysis. This chain is Enolase, found in Pelagibacter ubique (strain HTCC1062).